The sequence spans 354 residues: Uroporphyrinogen decarboxylase (354 aa).

Residues 27-31 (RQAGR), aspartate 77, tyrosine 154, serine 209, and histidine 327 each bind substrate.

This sequence belongs to the uroporphyrinogen decarboxylase family. Homodimer.

It is found in the cytoplasm. The catalysed reaction is uroporphyrinogen III + 4 H(+) = coproporphyrinogen III + 4 CO2. It functions in the pathway porphyrin-containing compound metabolism; protoporphyrin-IX biosynthesis; coproporphyrinogen-III from 5-aminolevulinate: step 4/4. Functionally, catalyzes the decarboxylation of four acetate groups of uroporphyrinogen-III to yield coproporphyrinogen-III. The chain is Uroporphyrinogen decarboxylase from Pseudomonas syringae pv. syringae (strain B728a).